The sequence spans 278 residues: Para-Rep C1 (278 aa).

The region spanning 1–95 (MACSNWVFTR…VAGPWSYGDL (95 aa)) is the CRESS-DNA virus Rep endonuclease domain. An RCR-1 motif is present at residues 8–11 (FTRN). A divalent metal cation contacts are provided by Glu-33 and His-39. An RCR-2 motif is present at residues 39–41 (HIQ). Residues 48 to 69 (KKARFSTVKEIIGGNPHVEKMK) carry the Nuclear localization signal motif. Tyr-78 serves as the catalytic For DNA cleavage activity. The short motif at 78–81 (YVQK) is the RCR-3 element. Glu-83 contacts a divalent metal cation. Residues 95-101 (LLKRGSH) carry the Nuclear localization signal motif. Residue 176 to 178 (GKS) participates in ATP binding.

This sequence belongs to the nanoviridea/circoviridae replication-associated protein family. As to quaternary structure, homooligomer (Potential). Rep binds to repeated DNA motifs (iterons). It depends on Mg(2+) as a cofactor. The cofactor is Mn(2+).

The protein localises to the host nucleus. It catalyses the reaction ATP + H2O = ADP + phosphate + H(+). Its function is as follows. Initiates and terminates the replication only of its own subviral DNA molecule. The closed circular ssDNA genome is first converted to a superhelical dsDNA. Rep binds a specific hairpin at the genome origin of replication. Introduces an endonucleolytic nick within the intergenic region of the genome, thereby initiating the rolling circle replication (RCR). Following cleavage, binds covalently to the 5'-phosphate of DNA as a tyrosyl ester. The cleavage gives rise to a free 3'-OH that serves as a primer for the cellular DNA polymerase. The polymerase synthesizes the (+) strand DNA by rolling circle mechanism. After one round of replication, a Rep-catalyzed nucleotidyl transfer reaction releases a circular single-stranded virus genome, thereby terminating the replication. Displays origin-specific DNA cleavage, nucleotidyl transferase, ATPase and helicase activities. The chain is Para-Rep C1 (C1) from Faba bean necrotic yellows C1 alphasatellite (FBNYC1A).